The sequence spans 354 residues: Probable L-ascorbate-6-phosphate lactonase UlaG (354 aa).

It belongs to the UlaG family. Requires a divalent metal cation as cofactor.

It is found in the cytoplasm. It carries out the reaction L-ascorbate 6-phosphate + H2O = 3-dehydro-L-gulonate 6-phosphate. It participates in cofactor degradation; L-ascorbate degradation; D-xylulose 5-phosphate from L-ascorbate: step 1/4. In terms of biological role, probably catalyzes the hydrolysis of L-ascorbate-6-P into 3-keto-L-gulonate-6-P. Is essential for L-ascorbate utilization under anaerobic conditions. This Salmonella heidelberg (strain SL476) protein is Probable L-ascorbate-6-phosphate lactonase UlaG.